The chain runs to 229 residues: B-cell antigen receptor complex-associated protein beta chain (229 aa).

The signal sequence occupies residues 1–28; the sequence is MARLALSPVPSHWMVALLLLLSAEPVPA. The Extracellular portion of the chain corresponds to 29-159; that stretch reads ARSEDRYRNP…QLKQRNTLKD (131 aa). One can recognise an Ig-like V-type domain in the interval 38–138; the sequence is PKGSACSRIW…TSEVYQGCGT (101 aa). 2 cysteine pairs are disulfide-bonded: cysteine 43–cysteine 126 and cysteine 65–cysteine 122. Asparagine 73, asparagine 101, asparagine 127, and asparagine 128 each carry an N-linked (GlcNAc...) asparagine glycan. A helical membrane pass occupies residues 160–180; the sequence is GIIMIQTLLIILFIIVPIFLL. The Cytoplasmic segment spans residues 181 to 229; that stretch reads LDKDDSKAGMEEDHTYEGLDIDQTATYEDIVTLRTGEVKWSVGEHPGQE. Residues 185 to 213 form the ITAM domain; sequence DSKAGMEEDHTYEGLDIDQTATYEDIVTL. Tyrosine 196 and tyrosine 207 each carry phosphotyrosine; by SRC-type Tyr-kinases.

As to quaternary structure, heterodimer of alpha and beta chains; disulfide-linked. Part of the B-cell antigen receptor complex where the alpha/beta chain heterodimer is non-covalently associated with an antigen-specific membrane-bound surface immunoglobulin of two heavy chains and two light chains. Interacts with LYN. Phosphorylated on tyrosine upon B-cell activation by SRC-type Tyr-kinases such as BLK, LYN and SYK. B-cells.

It localises to the cell membrane. Functionally, required in cooperation with CD79A for initiation of the signal transduction cascade activated by the B-cell antigen receptor complex (BCR) which leads to internalization of the complex, trafficking to late endosomes and antigen presentation. Enhances phosphorylation of CD79A, possibly by recruiting kinases which phosphorylate CD79A or by recruiting proteins which bind to CD79A and protect it from dephosphorylation. In Homo sapiens (Human), this protein is B-cell antigen receptor complex-associated protein beta chain (CD79B).